The chain runs to 293 residues: ATP synthase subunit a (293 aa).

Transmembrane regions (helical) follow at residues 40 to 60, 97 to 117, 151 to 171, 188 to 208, 225 to 245, and 264 to 284; these read DSLFWSILMGLLVVFCLWLAA, LFVAPLALTVFLWIILMNALD, DLNVPMGMSLGVLLLMFYYGI, FHAHGLASLVLAPFNLLLNLI, MFAGELIFMLIALLGGAWTGF, and AIFHILIVLLQAFIFMMLTLV.

It belongs to the ATPase A chain family. As to quaternary structure, F-type ATPases have 2 components, CF(1) - the catalytic core - and CF(0) - the membrane proton channel. CF(1) has five subunits: alpha(3), beta(3), gamma(1), delta(1), epsilon(1). CF(0) has three main subunits: a(1), b(2) and c(9-12). The alpha and beta chains form an alternating ring which encloses part of the gamma chain. CF(1) is attached to CF(0) by a central stalk formed by the gamma and epsilon chains, while a peripheral stalk is formed by the delta and b chains.

It is found in the cell inner membrane. Functionally, key component of the proton channel; it plays a direct role in the translocation of protons across the membrane. The sequence is that of ATP synthase subunit a from Bordetella bronchiseptica (strain ATCC BAA-588 / NCTC 13252 / RB50) (Alcaligenes bronchisepticus).